The sequence spans 285 residues: Probable endonuclease 4 (285 aa).

9 residues coordinate Zn(2+): histidine 69, histidine 109, glutamate 145, aspartate 179, histidine 182, histidine 216, aspartate 229, histidine 231, and glutamate 261.

Belongs to the AP endonuclease 2 family. Zn(2+) is required as a cofactor.

It catalyses the reaction Endonucleolytic cleavage to 5'-phosphooligonucleotide end-products.. In terms of biological role, endonuclease IV plays a role in DNA repair. It cleaves phosphodiester bonds at apurinic or apyrimidinic (AP) sites, generating a 3'-hydroxyl group and a 5'-terminal sugar phosphate. The protein is Probable endonuclease 4 of Citrobacter koseri (strain ATCC BAA-895 / CDC 4225-83 / SGSC4696).